A 468-amino-acid polypeptide reads, in one-letter code: Tyrosine-protein phosphatase YopH (468 aa).

Residues 127–194 (ARGHVSSHSH…TVSPYGPEAR (68 aa)) form a disordered region. The segment covering 130–141 (HVSSHSHSALHA) has biased composition (low complexity). The Tyrosine-protein phosphatase domain maps to 152-461 (SHLDPRTPPL…DVLIKLAEGQ (310 aa)). Cysteine 403 serves as the catalytic Phosphocysteine intermediate.

Belongs to the protein-tyrosine phosphatase family. Non-receptor class subfamily.

The protein localises to the secreted. The enzyme catalyses O-phospho-L-tyrosyl-[protein] + H2O = L-tyrosyl-[protein] + phosphate. In terms of biological role, essential virulence determinant. This protein is a protein tyrosine phosphatase. The essential function of YopH in Yersinia pathogenesis is host-protein dephosphorylation. It contributes to the ability of the bacteria to resist phagocytosis by peritoneal macrophages. The polypeptide is Tyrosine-protein phosphatase YopH (yopH) (Yersinia pseudotuberculosis serotype I (strain IP32953)).